Consider the following 81-residue polypeptide: Large ribosomal subunit protein bL31B (81 aa).

Belongs to the bacterial ribosomal protein bL31 family. Type B subfamily. In terms of assembly, part of the 50S ribosomal subunit.

The protein is Large ribosomal subunit protein bL31B of Bacillus licheniformis (strain ATCC 14580 / DSM 13 / JCM 2505 / CCUG 7422 / NBRC 12200 / NCIMB 9375 / NCTC 10341 / NRRL NRS-1264 / Gibson 46).